We begin with the raw amino-acid sequence, 455 residues long: tRNA-2-methylthio-N(6)-dimethylallyladenosine synthase (455 aa).

An MTTase N-terminal domain is found at 18–133; it reads KKLFIETYGC…LPELIAAVEA (116 aa). Cys27, Cys63, Cys97, Cys171, Cys175, and Cys178 together coordinate [4Fe-4S] cluster. One can recognise a Radical SAM core domain in the interval 157-390; that stretch reads CGNHISGFVS…IALQNRLSAE (234 aa). Positions 393-455 constitute a TRAM domain; sequence QRCIGKTYEV…SSATLKGEEV (63 aa).

It belongs to the methylthiotransferase family. MiaB subfamily. As to quaternary structure, monomer. The cofactor is [4Fe-4S] cluster.

Its subcellular location is the cytoplasm. The catalysed reaction is N(6)-dimethylallyladenosine(37) in tRNA + (sulfur carrier)-SH + AH2 + 2 S-adenosyl-L-methionine = 2-methylsulfanyl-N(6)-dimethylallyladenosine(37) in tRNA + (sulfur carrier)-H + 5'-deoxyadenosine + L-methionine + A + S-adenosyl-L-homocysteine + 2 H(+). Catalyzes the methylthiolation of N6-(dimethylallyl)adenosine (i(6)A), leading to the formation of 2-methylthio-N6-(dimethylallyl)adenosine (ms(2)i(6)A) at position 37 in tRNAs that read codons beginning with uridine. The polypeptide is tRNA-2-methylthio-N(6)-dimethylallyladenosine synthase (Bacteroides thetaiotaomicron (strain ATCC 29148 / DSM 2079 / JCM 5827 / CCUG 10774 / NCTC 10582 / VPI-5482 / E50)).